Here is a 170-residue protein sequence, read N- to C-terminus: Adenine phosphoribosyltransferase (170 aa).

Belongs to the purine/pyrimidine phosphoribosyltransferase family. Homodimer.

Its subcellular location is the cytoplasm. It catalyses the reaction AMP + diphosphate = 5-phospho-alpha-D-ribose 1-diphosphate + adenine. Its pathway is purine metabolism; AMP biosynthesis via salvage pathway; AMP from adenine: step 1/1. Functionally, catalyzes a salvage reaction resulting in the formation of AMP, that is energically less costly than de novo synthesis. The polypeptide is Adenine phosphoribosyltransferase (Trichodesmium erythraeum (strain IMS101)).